A 364-amino-acid polypeptide reads, in one-letter code: Triacylglycerol lipase (364 aa).

Residues 1–44 (MARTMRSRVVAGAVACAMSIAPFAGTTAVMTLATTHAAMAATAP) form the signal peptide. An AB hydrolase-1 domain is found at 54 to 266 (PIILVHGLSG…AIQPTLSVFG (213 aa)). Position 61 (L61) interacts with substrate. S131 (nucleophile) is an active-site residue. Q132 is a substrate binding site. An intrachain disulfide couples C234 to C314. Residue D286 participates in Ca(2+) binding. Residues D308 and H330 each act as charge relay system in the active site. The Ca(2+) site is built by D332, Q336, and V340.

The protein belongs to the AB hydrolase superfamily. Pseudomonas lipase family. In terms of assembly, monomer. Ca(2+) serves as cofactor.

It localises to the secreted. The catalysed reaction is a triacylglycerol + H2O = a diacylglycerol + a fatty acid + H(+). With respect to regulation, inhibited by RC-(Rp,Sp)- and SC-(Rp,Sp)-1,2-dioctylcarbamoylglycero-3-O-p-nitrophenyl octylphosphonate. Also inhibited by diethyl-p-nitrophenylphosphate (E600). Its function is as follows. Catalyzes the hydrolysis of triacylglycerol. It shows a preference for triacylglycerols with a chain length between 6 and 12 carbons. The sequence is that of Triacylglycerol lipase from Burkholderia cepacia (Pseudomonas cepacia).